The following is a 118-amino-acid chain: Ribosome-binding factor A (118 aa).

This sequence belongs to the RbfA family. As to quaternary structure, monomer. Binds 30S ribosomal subunits, but not 50S ribosomal subunits or 70S ribosomes.

It is found in the cytoplasm. In terms of biological role, one of several proteins that assist in the late maturation steps of the functional core of the 30S ribosomal subunit. Associates with free 30S ribosomal subunits (but not with 30S subunits that are part of 70S ribosomes or polysomes). Required for efficient processing of 16S rRNA. May interact with the 5'-terminal helix region of 16S rRNA. The sequence is that of Ribosome-binding factor A from Dehalococcoides mccartyi (strain ATCC BAA-2266 / KCTC 15142 / 195) (Dehalococcoides ethenogenes (strain 195)).